Here is a 303-residue protein sequence, read N- to C-terminus: tRNA pseudouridine synthase B (303 aa).

D38 serves as the catalytic Nucleophile.

The protein belongs to the pseudouridine synthase TruB family. Type 1 subfamily.

The catalysed reaction is uridine(55) in tRNA = pseudouridine(55) in tRNA. Functionally, responsible for synthesis of pseudouridine from uracil-55 in the psi GC loop of transfer RNAs. The sequence is that of tRNA pseudouridine synthase B from Levilactobacillus brevis (strain ATCC 367 / BCRC 12310 / CIP 105137 / JCM 1170 / LMG 11437 / NCIMB 947 / NCTC 947) (Lactobacillus brevis).